The primary structure comprises 153 residues: MSNQLNTMDIKEILKFLPHRYPFLLIDRVLDFTPGETLHAIKNVTINEPFFQGHFPVAPVMPGVLILEAMAQATGLLAFKTMSDEPSNDALYYFAGIDNARFKRVVEPGDQLHFEVKMIKERRGIGVFTGEAKVDGELVCSAEIMCARREIAK.

His54 is a catalytic residue.

It belongs to the thioester dehydratase family. FabZ subfamily.

It localises to the cytoplasm. It catalyses the reaction a (3R)-hydroxyacyl-[ACP] = a (2E)-enoyl-[ACP] + H2O. Functionally, involved in unsaturated fatty acids biosynthesis. Catalyzes the dehydration of short chain beta-hydroxyacyl-ACPs and long chain saturated and unsaturated beta-hydroxyacyl-ACPs. The polypeptide is 3-hydroxyacyl-[acyl-carrier-protein] dehydratase FabZ (Shewanella loihica (strain ATCC BAA-1088 / PV-4)).